Here is a 147-residue protein sequence, read N- to C-terminus: Large ribosomal subunit protein bL9 (147 aa).

It belongs to the bacterial ribosomal protein bL9 family.

Its function is as follows. Binds to the 23S rRNA. The chain is Large ribosomal subunit protein bL9 from Gemmatimonas aurantiaca (strain DSM 14586 / JCM 11422 / NBRC 100505 / T-27).